Here is an 84-residue protein sequence, read N- to C-terminus: Dihydroneopterin aldolase (84 aa).

Substrate contacts are provided by residues Glu-22, Tyr-54, and 73-74 (IE).

The protein belongs to the DHNA family.

The enzyme catalyses 7,8-dihydroneopterin = 6-hydroxymethyl-7,8-dihydropterin + glycolaldehyde. It carries out the reaction 7,8-dihydroneopterin = 7,8-dihydromonapterin. The protein operates within cofactor biosynthesis; tetrahydrofolate biosynthesis; 2-amino-4-hydroxy-6-hydroxymethyl-7,8-dihydropteridine diphosphate from 7,8-dihydroneopterin triphosphate: step 3/4. Catalyzes the conversion of 7,8-dihydroneopterin to 6-hydroxymethyl-7,8-dihydropterin. Can also catalyze the epimerization of carbon 2' of dihydroneopterin to dihydromonapterin. The sequence is that of Dihydroneopterin aldolase (folB) from Staphylococcus haemolyticus.